Here is a 437-residue protein sequence, read N- to C-terminus: Phosphoglucosamine mutase (437 aa).

Ser101 functions as the Phosphoserine intermediate in the catalytic mechanism. The Mg(2+) site is built by Ser101, Asp234, Asp236, and Asp238. Ser101 carries the post-translational modification Phosphoserine.

The protein belongs to the phosphohexose mutase family. Mg(2+) is required as a cofactor. Activated by phosphorylation.

It catalyses the reaction alpha-D-glucosamine 1-phosphate = D-glucosamine 6-phosphate. Catalyzes the conversion of glucosamine-6-phosphate to glucosamine-1-phosphate. This chain is Phosphoglucosamine mutase, found in Thermus thermophilus (strain ATCC 27634 / DSM 579 / HB8).